A 278-amino-acid chain; its full sequence is HTH-type transcriptional activator RhaS (278 aa).

One can recognise an HTH araC/xylS-type domain in the interval 174-272; the sequence is NLLLAWLEDH…NWSPRDIRQG (99 aa). DNA-binding regions (H-T-H motif) lie at residues 191-212 and 239-262; these read DAVA…KQQT and VTDI…RREF.

As to quaternary structure, binds DNA as a dimer.

The protein localises to the cytoplasm. In terms of biological role, activates expression of the rhaBAD and rhaT operons. In Escherichia coli O6:H1 (strain CFT073 / ATCC 700928 / UPEC), this protein is HTH-type transcriptional activator RhaS.